The following is a 347-amino-acid chain: Ryncolin-3 (347 aa).

Positions 1–19 (MKPWAAFHLIFLVASSVEG) are cleaved as a signal peptide. The Collagen-like domain occupies 57-114 (GIPGVPGINGSEGLKGDPGPQGLPGETGFDGIPGVAGPKGDKGDQGDKGDKGDKGDKG). Positions 62–115 (PGINGSEGLKGDPGPQGLPGETGFDGIPGVAGPKGDKGDQGDKGDKGDKGDKGD) are disordered. The span at 95–115 (KGDKGDQGDKGDKGDKGDKGD) shows a compositional bias: basic and acidic residues. The region spanning 121 to 341 (DCPPTDVEVR…YADMKIRPQQ (221 aa)) is the Fibrinogen C-terminal domain. Cystine bridges form between Cys-132–Cys-160 and Cys-284–Cys-297.

It belongs to the ficolin lectin family. Veficolin subfamily. In terms of processing, hydroxylated. As to expression, expressed by the venom duct.

The protein resides in the secreted. Functionally, initiates complement activation and/or interferes in platelet aggregation and/or blood coagulation. The sequence is that of Ryncolin-3 from Cerberus rynchops (Dog-faced water snake).